A 357-amino-acid chain; its full sequence is Alanine racemase (357 aa).

K35 acts as the Proton acceptor; specific for D-alanine in catalysis. Residue K35 is modified to N6-(pyridoxal phosphate)lysine. R130 provides a ligand contact to substrate. The active-site Proton acceptor; specific for L-alanine is the Y253. M302 contacts substrate.

Belongs to the alanine racemase family. Requires pyridoxal 5'-phosphate as cofactor.

It carries out the reaction L-alanine = D-alanine. Its pathway is amino-acid biosynthesis; D-alanine biosynthesis; D-alanine from L-alanine: step 1/1. Catalyzes the interconversion of L-alanine and D-alanine. May also act on other amino acids. In Wigglesworthia glossinidia brevipalpis, this protein is Alanine racemase (alr).